We begin with the raw amino-acid sequence, 434 residues long: UDP-N-acetylmuramate--L-alanine ligase (434 aa).

An ATP-binding site is contributed by 108–114; the sequence is GSHGKTT.

The protein belongs to the MurCDEF family.

Its subcellular location is the cytoplasm. It carries out the reaction UDP-N-acetyl-alpha-D-muramate + L-alanine + ATP = UDP-N-acetyl-alpha-D-muramoyl-L-alanine + ADP + phosphate + H(+). The protein operates within cell wall biogenesis; peptidoglycan biosynthesis. Cell wall formation. The chain is UDP-N-acetylmuramate--L-alanine ligase from Geobacillus kaustophilus (strain HTA426).